Here is a 277-residue protein sequence, read N- to C-terminus: Phosphatidylglycerol--prolipoprotein diacylglyceryl transferase (277 aa).

A run of 4 helical transmembrane segments spans residues 18-38, 51-71, 89-109, and 116-136; these read ISVK…LLLA, IIVD…RIYY, IWHG…TAII, and ISFW…QAIG. R137 is an a 1,2-diacyl-sn-glycero-3-phospho-(1'-sn-glycerol) binding site. The next 3 helical transmembrane spans lie at 177-197, 205-225, and 235-255; these read QPTF…LLII, GELF…IEGM, and FRVS…IIIY.

It belongs to the Lgt family.

The protein resides in the cell membrane. It catalyses the reaction L-cysteinyl-[prolipoprotein] + a 1,2-diacyl-sn-glycero-3-phospho-(1'-sn-glycerol) = an S-1,2-diacyl-sn-glyceryl-L-cysteinyl-[prolipoprotein] + sn-glycerol 1-phosphate + H(+). It functions in the pathway protein modification; lipoprotein biosynthesis (diacylglyceryl transfer). In terms of biological role, catalyzes the transfer of the diacylglyceryl group from phosphatidylglycerol to the sulfhydryl group of the N-terminal cysteine of a prolipoprotein, the first step in the formation of mature lipoproteins. In Listeria monocytogenes serotype 4b (strain CLIP80459), this protein is Phosphatidylglycerol--prolipoprotein diacylglyceryl transferase.